Reading from the N-terminus, the 311-residue chain is Immune-associated nucleotide-binding protein 7 (311 aa).

The AIG1-type G domain occupies 14–222; sequence KQAENIVLVG…YTDDTYHMIK (209 aa). Positions 23-30 are G1; sequence GRTGNGKS. Residues 23–31 and S44 each bind GTP; that span reads GRTGNGKSA. The interval 50–54 is G2; it reads GVTMK. Residues 72–75 are G3; that stretch reads DTPG. A G4 region spans residues 142–145; that stretch reads TGGD. Residues 181 to 183 form a G5 region; it reads DNK. A GTP-binding site is contributed by N182. Residues 218-295 are a coiled coil; it reads YHMIKEESEK…TQENNELNLA (78 aa).

This sequence belongs to the TRAFAC class TrmE-Era-EngA-EngB-Septin-like GTPase superfamily. AIG1/Toc34/Toc159-like paraseptin GTPase family. IAN subfamily. Ubiquitous.

This Arabidopsis thaliana (Mouse-ear cress) protein is Immune-associated nucleotide-binding protein 7.